The primary structure comprises 560 residues: Membrane protein insertase YidC (560 aa).

6 consecutive transmembrane segments (helical) span residues 5–25 (IINLIAAIILSLSIIFGWQYF), 334–354 (AIDFGWFYIITKPVFYAMNFF), 357–377 (YVGNFGVSILIVTVIIKLLMF), 431–451 (LPILVQIPLFFSIYKVLYVTI), 476–496 (LFGLLPFSPPSFLMIGAWPIL), and 522–542 (FMPLIFLFMFSSFPVGLLIYW).

The protein belongs to the OXA1/ALB3/YidC family. Type 1 subfamily. In terms of assembly, interacts with the Sec translocase complex via SecD. Specifically interacts with transmembrane segments of nascent integral membrane proteins during membrane integration.

Its subcellular location is the cell inner membrane. Its function is as follows. Required for the insertion and/or proper folding and/or complex formation of integral membrane proteins into the membrane. Involved in integration of membrane proteins that insert both dependently and independently of the Sec translocase complex, as well as at least some lipoproteins. Aids folding of multispanning membrane proteins. The protein is Membrane protein insertase YidC of Rickettsia felis (strain ATCC VR-1525 / URRWXCal2) (Rickettsia azadi).